Here is a 547-residue protein sequence, read N- to C-terminus: Phosphomethylpyrimidine synthase (547 aa).

Substrate contacts are provided by residues N150, M179, Y208, H244, 264–266, 305–308, and E344; these read SRG and DGLR. H348 lines the Zn(2+) pocket. Y371 is a substrate binding site. H412 contacts Zn(2+). The [4Fe-4S] cluster site is built by C492, C495, and C500.

The protein belongs to the ThiC family. The cofactor is [4Fe-4S] cluster.

It carries out the reaction 5-amino-1-(5-phospho-beta-D-ribosyl)imidazole + S-adenosyl-L-methionine = 4-amino-2-methyl-5-(phosphooxymethyl)pyrimidine + CO + 5'-deoxyadenosine + formate + L-methionine + 3 H(+). The protein operates within cofactor biosynthesis; thiamine diphosphate biosynthesis. In terms of biological role, catalyzes the synthesis of the hydroxymethylpyrimidine phosphate (HMP-P) moiety of thiamine from aminoimidazole ribotide (AIR) in a radical S-adenosyl-L-methionine (SAM)-dependent reaction. This Nocardia farcinica (strain IFM 10152) protein is Phosphomethylpyrimidine synthase.